The primary structure comprises 227 residues: Cytochrome c oxidase subunit 2 (227 aa).

The Mitochondrial intermembrane portion of the chain corresponds to 1–14; sequence MAYPFQLGLQDATS. A helical transmembrane segment spans residues 15-45; the sequence is PIMEELLHFHDHALMIVFLISSLVLYIISLM. At 46-59 the chain is on the mitochondrial matrix side; the sequence is LTTKLTHTSTMDAQ. The helical transmembrane segment at 60-87 threads the bilayer; sequence EVETVWTILPAIILILIALPSLRILYMM. The Mitochondrial intermembrane portion of the chain corresponds to 88 to 227; it reads DEINNPSLTV…YFETWSALMV (140 aa). Positions 161, 196, 198, 200, 204, and 207 each coordinate Cu cation. Glu198 serves as a coordination point for Mg(2+). Position 218 is a phosphotyrosine (Tyr218).

The protein belongs to the cytochrome c oxidase subunit 2 family. In terms of assembly, component of the cytochrome c oxidase (complex IV, CIV), a multisubunit enzyme composed of 14 subunits. The complex is composed of a catalytic core of 3 subunits MT-CO1, MT-CO2 and MT-CO3, encoded in the mitochondrial DNA, and 11 supernumerary subunits COX4I, COX5A, COX5B, COX6A, COX6B, COX6C, COX7A, COX7B, COX7C, COX8 and NDUFA4, which are encoded in the nuclear genome. The complex exists as a monomer or a dimer and forms supercomplexes (SCs) in the inner mitochondrial membrane with NADH-ubiquinone oxidoreductase (complex I, CI) and ubiquinol-cytochrome c oxidoreductase (cytochrome b-c1 complex, complex III, CIII), resulting in different assemblies (supercomplex SCI(1)III(2)IV(1) and megacomplex MCI(2)III(2)IV(2)). Found in a complex with TMEM177, COA6, COX18, COX20, SCO1 and SCO2. Interacts with TMEM177 in a COX20-dependent manner. Interacts with COX20. Interacts with COX16. The cofactor is Cu cation.

Its subcellular location is the mitochondrion inner membrane. It carries out the reaction 4 Fe(II)-[cytochrome c] + O2 + 8 H(+)(in) = 4 Fe(III)-[cytochrome c] + 2 H2O + 4 H(+)(out). Its function is as follows. Component of the cytochrome c oxidase, the last enzyme in the mitochondrial electron transport chain which drives oxidative phosphorylation. The respiratory chain contains 3 multisubunit complexes succinate dehydrogenase (complex II, CII), ubiquinol-cytochrome c oxidoreductase (cytochrome b-c1 complex, complex III, CIII) and cytochrome c oxidase (complex IV, CIV), that cooperate to transfer electrons derived from NADH and succinate to molecular oxygen, creating an electrochemical gradient over the inner membrane that drives transmembrane transport and the ATP synthase. Cytochrome c oxidase is the component of the respiratory chain that catalyzes the reduction of oxygen to water. Electrons originating from reduced cytochrome c in the intermembrane space (IMS) are transferred via the dinuclear copper A center (CU(A)) of subunit 2 and heme A of subunit 1 to the active site in subunit 1, a binuclear center (BNC) formed by heme A3 and copper B (CU(B)). The BNC reduces molecular oxygen to 2 water molecules using 4 electrons from cytochrome c in the IMS and 4 protons from the mitochondrial matrix. The chain is Cytochrome c oxidase subunit 2 (MT-CO2) from Canis aureus (Golden jackal).